Consider the following 104-residue polypeptide: Pyrimidine/purine nucleoside phosphorylase (104 aa).

The protein belongs to the nucleoside phosphorylase PpnP family.

It catalyses the reaction a purine D-ribonucleoside + phosphate = a purine nucleobase + alpha-D-ribose 1-phosphate. It carries out the reaction adenosine + phosphate = alpha-D-ribose 1-phosphate + adenine. The catalysed reaction is cytidine + phosphate = cytosine + alpha-D-ribose 1-phosphate. The enzyme catalyses guanosine + phosphate = alpha-D-ribose 1-phosphate + guanine. It catalyses the reaction inosine + phosphate = alpha-D-ribose 1-phosphate + hypoxanthine. It carries out the reaction thymidine + phosphate = 2-deoxy-alpha-D-ribose 1-phosphate + thymine. The catalysed reaction is uridine + phosphate = alpha-D-ribose 1-phosphate + uracil. The enzyme catalyses xanthosine + phosphate = alpha-D-ribose 1-phosphate + xanthine. Functionally, catalyzes the phosphorolysis of diverse nucleosides, yielding D-ribose 1-phosphate and the respective free bases. Can use uridine, adenosine, guanosine, cytidine, thymidine, inosine and xanthosine as substrates. Also catalyzes the reverse reactions. The polypeptide is Pyrimidine/purine nucleoside phosphorylase (Trichlorobacter lovleyi (strain ATCC BAA-1151 / DSM 17278 / SZ) (Geobacter lovleyi)).